Reading from the N-terminus, the 189-residue chain is Pyridoxal 5'-phosphate synthase subunit PdxT (189 aa).

Gly52 to Ser54 is a binding site for L-glutamine. Cys81 acts as the Nucleophile in catalysis. Residues Arg108 and Ile136–Arg137 each bind L-glutamine. Catalysis depends on charge relay system residues His172 and Glu174.

It belongs to the glutaminase PdxT/SNO family. In terms of assembly, in the presence of PdxS, forms a dodecamer of heterodimers. Only shows activity in the heterodimer.

It carries out the reaction aldehydo-D-ribose 5-phosphate + D-glyceraldehyde 3-phosphate + L-glutamine = pyridoxal 5'-phosphate + L-glutamate + phosphate + 3 H2O + H(+). The enzyme catalyses L-glutamine + H2O = L-glutamate + NH4(+). The protein operates within cofactor biosynthesis; pyridoxal 5'-phosphate biosynthesis. Functionally, catalyzes the hydrolysis of glutamine to glutamate and ammonia as part of the biosynthesis of pyridoxal 5'-phosphate. The resulting ammonia molecule is channeled to the active site of PdxS. The protein is Pyridoxal 5'-phosphate synthase subunit PdxT of Haemophilus ducreyi (strain 35000HP / ATCC 700724).